The sequence spans 423 residues: Pre-mRNA polyadenylation factor fip-1 (423 aa).

Over residues 1–11 the composition is skewed to acidic residues; sequence MDIDEDEDFYA. Disordered stretches follow at residues 1-178, 278-307, and 360-423; these read MDID…PVRT, GPGG…GGPG, and PGGG…GRRW. A compositionally biased stretch (low complexity) spans 19–61; that stretch reads PPTTAATTTTPATTTTTAAPTTTTTTTSTTTASAPPTTTSSST. The segment covering 65-90 has biased composition (acidic residues); the sequence is DELEEGEEEDEGGGAMDEDDDSDIDI. A compositionally biased stretch (low complexity) spans 135–146; it reads GTNSNSNSSSNK. Residues 360–415 are compositionally biased toward gly residues; sequence PGGGPGGPGTGGMGPGGPGGQGGQGQQFGGGFGGNQGQGGYGGYDQMGGAGGGGRG.

This sequence belongs to the FIP1 family.

Its subcellular location is the nucleus. In terms of biological role, pre-mRNA polyadenylation factor that directly interacts with poly(A) polymerase. This Neurospora crassa (strain ATCC 24698 / 74-OR23-1A / CBS 708.71 / DSM 1257 / FGSC 987) protein is Pre-mRNA polyadenylation factor fip-1 (fip-1).